We begin with the raw amino-acid sequence, 1663 residues long: Cortactin-binding protein 2 (1663 aa).

Disordered regions lie at residues 1-23 (MATDGASCEPDLSRAPEDAAGAA), 203-222 (KKKTNELEEELSAEKRRSTE), 358-440 (RQAS…LHPG), and 454-479 (GNANDPDQNGNTTQSPPSRDMSPTSR). A coiled-coil region spans residues 119-276 (KKMQERMSAQ…EQLKRGSDSK (158 aa)). A compositionally biased stretch (low complexity) spans 386–396 (PSTDSTPDPTS). The segment covering 411-422 (QTPGIAPQNSQA) has biased composition (polar residues). Residue Arg498 is modified to Asymmetric dimethylarginine. The tract at residues 499–616 (FTSPQAGAPS…SSPQLPPKPS (118 aa)) is disordered. A compositionally biased stretch (polar residues) spans 583–593 (TVASPPSSLPQ). ANK repeat units follow at residues 709 to 739 (GRPTLLQQAAAQGNVTLLSMLLNEEGLDINY), 743 to 772 (DGHSALYSAAKNGHTDCVRLLLSAEAQINA), 776 to 805 (NGFTPLCAAAAQGHFECVELLIAYDANINH), 809 to 838 (GGQTPLYLACKNENKECIKLLLEAGTNRSV), 842 to 871 (DGWTPVHAAVDTGNVDSLKLLMYHRIPACG), and 912 to 942 (EGWTAAHIAASKGFKNCLEILCRHGGLEPER). Residues 1446–1477 (NKKKGESGAWRKVNTSPRRKSGRFSLPTWNKP) are disordered. Ser1524 is modified (phosphoserine). Disordered stretches follow at residues 1580-1602 (SQKEVSPLSSHQTTECSNSKSKT) and 1618-1663 (SKVT…KPNK). Over residues 1582-1599 (KEVSPLSSHQTTECSNSK) the composition is skewed to polar residues. Residues 1624 to 1638 (SQNTKRSSSSSNTRQ) show a composition bias toward low complexity. Residues 1645–1663 (SKKENWNLHKNEHLDKPNK) are compositionally biased toward basic and acidic residues.

As to quaternary structure, interacts with CTTN/cortactin SH3 domain. Interacts with STRN, STRN4/zinedin and MOB4/phocein; this interactions mediate the association with the STRIPAK core complex and may regulate dendritic spine distribution of the STRIPAK complex in hippocampal neurons. Activation of glutamate receptors weakens the interaction with STRN and STRN4.

It localises to the cytoplasm. The protein localises to the cell cortex. It is found in the cell projection. The protein resides in the dendritic spine. Regulates the dendritic spine distribution of CTTN/cortactin in hippocampal neurons, and thus controls dendritic spinogenesis and dendritic spine maintenance. Associates with the striatin-interacting phosphatase and kinase (STRIPAK) core complex to regulate dendritic spine distribution of the STRIPAK complex in hippocampal neurons. The polypeptide is Cortactin-binding protein 2 (CTTNBP2) (Colobus guereza (Mantled guereza)).